Reading from the N-terminus, the 114-residue chain is Hydrogenase maturation factor HypA (114 aa).

His2 contacts Ni(2+). The Zn(2+) site is built by Cys70, Cys73, Cys86, and Cys89.

It belongs to the HypA/HybF family.

Functionally, involved in the maturation of [NiFe] hydrogenases. Required for nickel insertion into the metal center of the hydrogenase. The polypeptide is Hydrogenase maturation factor HypA (Rippkaea orientalis (strain PCC 8801 / RF-1) (Cyanothece sp. (strain PCC 8801))).